We begin with the raw amino-acid sequence, 358 residues long: Chondroadherin (358 aa).

A signal peptide spans 1-20 (MARVLLLSLVFLAILLPALA). In terms of domain architecture, LRRNT spans 21 to 50 (ACPQNCHCHGDLQHVICDKVGLQKIPKVSE). Cysteines 22 and 37 form a disulfide. LRR repeat units follow at residues 51–72 (TTKLLNLQRNNFPVLAANSFRT), 75–96 (NLVSLHLQHCNIREVAAGAFRG), 99–120 (QLIYLYLSHNDIRVLRAGAFDD), 123–144 (ELTYLYLDHNKVSELPRGLLSP), 147–168 (NLFILQLNNNKIRELRAGAFQG), 171–192 (DLRWLYLSENALTSLHPGSLDD), 195–216 (NLAKFHLDRNQLSSYPSAALSK), 219–240 (VVEELKLSHNPLKSIPDNAFQS), 244–265 (YLETLWLDNTNLEKFSDAAFAG), and 268–289 (TLKHVHLENNRLNQLPSTFPFD). Ser143 is a glycosylation site (O-linked (GalNAc...) serine). One can recognise an LRRCT domain in the interval 299–347 (NPWKCTCQLRGLRRWLEAKTSRPDATCSSPAKFKGQRIRDTDALRSCKS). Cystine bridges form between Cys303/Cys345 and Cys305/Cys325. The tract at residues 321-358 (PDATCSSPAKFKGQRIRDTDALRSCKSPTKRSKKAGRH) is disordered. A compositionally biased stretch (basic residues) spans 348 to 358 (PTKRSKKAGRH).

The protein belongs to the small leucine-rich proteoglycan (SLRP) family. SLRP class IV subfamily. Mostly monomeric. Present in femoral head and rib cartilage, as well as in tendon. Detected in bone marrow.

Its subcellular location is the secreted. The protein resides in the extracellular space. It localises to the extracellular matrix. Functionally, promotes attachment of chondrocytes, fibroblasts, and osteoblasts. This binding is mediated (at least for chondrocytes and fibroblasts) by the integrin alpha(2)beta(1). May play an important role in the regulation of chondrocyte growth and proliferation. The protein is Chondroadherin (Chad) of Rattus norvegicus (Rat).